We begin with the raw amino-acid sequence, 244 residues long: Securin-like protein (244 aa).

The interval 31 to 53 is disordered; it reads ELEKTPSRGGLGLVVNSSKTPGG.

In terms of assembly, forms a complex (via C-terminus) with separase sep-1. Interaction with ify-1 stabilizes sep-1. Also maintains the complex in the cytoplasm during interphase and recruits it to chromosomes during the first meiotic division. Interacts with E3 ubiquitin-protein ligase etc-1. In terms of processing, ubiquitinated by etc-1 likely at the onset of anaphase, resulting in its degradation. In terms of tissue distribution, expressed in germ cells including oocytes.

It is found in the cytoplasm. It localises to the chromosome. Its subcellular location is the cytoskeleton. The protein localises to the spindle. Its function is as follows. Acts as a chaperone and as an inhibitor for separase sep-1. Plays an essential role in maintaining chromosome cohesion prior to meiotic and mitotic anaphase, in cytokinesis and in organizing the spindle and the centrosome. Ubiquitination-dependent degradation at the onset of anaphase is likely to activate sep-1 resulting in the proteolysis of the cohesin complex and the subsequent segregation of the chromosomes. Also required for cortical granule exocytosis. The chain is Securin-like protein from Caenorhabditis elegans.